The following is a 1469-amino-acid chain: Accumulation-associated protein (1469 aa).

Positions 1 to 52 are cleaved as a signal peptide; that stretch reads MGKRRQGPINKKVDFLPNKLNKYSIRKFTVGTASILLGSTLIFGSSSHEAKA. Disordered stretches follow at residues 52–164, 486–511, and 528–1443; these read AAEE…SEPV, GIETTTTPTYVNPNTGEKVGEGTPTT, and EIKP…QANE. 2 stretches are compositionally biased toward polar residues: residues 75–94 and 110–125; these read ENTNQPTVNNEAPQMSSTLQ and KANSDNDTQTQFSEAP. Over residues 129–144 the composition is skewed to basic and acidic residues; that stretch reads DLARKEDIPAVSKNEE. Over residues 145–164 the composition is skewed to polar residues; that stretch reads LQSSQPNTDSKIEPTTSEPV. 7 consecutive G5 domains span residues 446–528, 574–656, 702–784, 830–912, 958–1040, 1086–1168, and 1211–1296; these read PKAV…GGEE, YGPV…GGEE, YGPV…GGEQ, and VTKY…GPTK. Residues 489-500 are compositionally biased toward low complexity; the sequence is TTTTPTYVNPNT. Composition is skewed to basic and acidic residues over residues 528-537 and 589-613; these read EIKPGHKDEF and PFDKKREFNPDLKPGEERVKQKGEP. Low complexity predominate over residues 614-629; the sequence is GTKTITTPTTKNPLTG. Composition is skewed to basic and acidic residues over residues 631 to 646 and 655 to 665; these read KVGEGEPTEKITKQPV and EEIKPGHKDEF. Positions 738–757 are enriched in low complexity; the sequence is KGEPGTKTITTPTTKNPLTG. Basic and acidic residues-rich tracts occupy residues 759–793 and 845–869; these read KVGEGEPTEKITKQPVDEIVHYGGEEIKPGHKDEF and PFDKKREFNPDLKPGEERVKQKGEP. Over residues 870 to 885 the composition is skewed to low complexity; it reads GTKTITTPTTKNPLTG. A compositionally biased stretch (basic and acidic residues) spans 887 to 921; it reads KVGEGEPTEKVTKQPVDEIVHYGGEEIKPGHKDEF. Over residues 994 to 1013 the composition is skewed to low complexity; that stretch reads KGEPGTKTITTPTTKNPLTG. Over residues 1015–1049 the composition is skewed to basic and acidic residues; sequence KVGEGEPTEKITKQPVDEIVHYGGEEIKPGHKDEF. A compositionally biased stretch (low complexity) spans 1122–1141; that stretch reads KGEPGTKTITTPTTKNPLTG. Composition is skewed to basic and acidic residues over residues 1143–1162, 1229–1253, and 1271–1286; these read KVGEGEPTEKITKQPVDEIV, PFDKKRVFNPDLKPGEERVKQKGEP, and KVGEGKSTEKVTKQPV. A compositionally biased stretch (polar residues) spans 1409–1443; it reads TPTQSGAPEQPNRSMHSTDNKNQLPDTGENRQANE. The LPXTG sorting signal motif lies at 1432 to 1436; sequence LPDTG. A Pentaglycyl murein peptidoglycan amidated threonine modification is found at Thr-1435. A propeptide spans 1436-1469 (removed by sortase); that stretch reads GENRQANEGTLVGSLLAIVGSLFIFGRRKKGNEK.

It localises to the secreted. Its subcellular location is the cell wall. In Staphylococcus epidermidis (strain ATCC 12228 / FDA PCI 1200), this protein is Accumulation-associated protein.